A 342-amino-acid chain; its full sequence is GTPase Obg (342 aa).

Positions 1–159 (MKFIDEAKIY…RWIRLELKLL (159 aa)) constitute an Obg domain. One can recognise an OBG-type G domain in the interval 160 to 332 (ADVGIIGLPN…LLYKIGEALK (173 aa)). GTP is bound by residues 166-173 (GLPNVGKS), 191-195 (FTTLT), 214-217 (DIPG), 284-287 (NKTD), and 313-315 (SAA). Residues S173 and T193 each contribute to the Mg(2+) site.

It belongs to the TRAFAC class OBG-HflX-like GTPase superfamily. OBG GTPase family. As to quaternary structure, monomer. Mg(2+) serves as cofactor.

The protein resides in the cytoplasm. Functionally, an essential GTPase which binds GTP, GDP and possibly (p)ppGpp with moderate affinity, with high nucleotide exchange rates and a fairly low GTP hydrolysis rate. Plays a role in control of the cell cycle, stress response, ribosome biogenesis and in those bacteria that undergo differentiation, in morphogenesis control. This chain is GTPase Obg, found in Syntrophus aciditrophicus (strain SB).